Consider the following 465-residue polypeptide: GTPase Der (465 aa).

EngA-type G domains follow at residues 3–166 and 184–358; these read FLVA…LNEY and IHFS…ACAN. GTP contacts are provided by residues 9–16, 56–60, 118–121, 190–197, 237–241, and 302–305; these read GRANVGKS, DTGGI, NKVD, GRPNVGKS, DTAGV, and NKWD. A KH-like domain is found at 359 to 443; the sequence is KKITTADATR…PIVFEFKQSE (85 aa). Residues 446–465 form a disordered region; it reads FADRKNKRSKDEGSKSKKVK.

Belongs to the TRAFAC class TrmE-Era-EngA-EngB-Septin-like GTPase superfamily. EngA (Der) GTPase family. In terms of assembly, associates with the 50S ribosomal subunit.

Functionally, GTPase that plays an essential role in the late steps of ribosome biogenesis. This is GTPase Der from Francisella tularensis subsp. novicida (strain U112).